Here is a 114-residue protein sequence, read N- to C-terminus: Reprimo-like protein (114 aa).

A helical transmembrane segment spans residues 61–81 (VVQIAVLCVLSLTVMFGIFFL).

This sequence belongs to the reprimo family.

It is found in the membrane. This is Reprimo-like protein (rprml) from Danio rerio (Zebrafish).